The sequence spans 165 residues: NADH-quinone oxidoreductase subunit I (165 aa).

4Fe-4S ferredoxin-type domains are found at residues 57 to 86 (RRYENGEERCIACKLCEAVCPALAITIESE) and 96 to 125 (TRYDIDLTKCIFCGFCEESCPVDSIVETHI). 8 residues coordinate [4Fe-4S] cluster: Cys66, Cys69, Cys72, Cys76, Cys105, Cys108, Cys111, and Cys115.

Belongs to the complex I 23 kDa subunit family. In terms of assembly, NDH-1 is composed of 14 different subunits. Subunits NuoA, H, J, K, L, M, N constitute the membrane sector of the complex. It depends on [4Fe-4S] cluster as a cofactor.

The protein resides in the cell inner membrane. It catalyses the reaction a quinone + NADH + 5 H(+)(in) = a quinol + NAD(+) + 4 H(+)(out). Functionally, NDH-1 shuttles electrons from NADH, via FMN and iron-sulfur (Fe-S) centers, to quinones in the respiratory chain. The immediate electron acceptor for the enzyme in this species is believed to be ubiquinone. Couples the redox reaction to proton translocation (for every two electrons transferred, four hydrogen ions are translocated across the cytoplasmic membrane), and thus conserves the redox energy in a proton gradient. This Methylibium petroleiphilum (strain ATCC BAA-1232 / LMG 22953 / PM1) protein is NADH-quinone oxidoreductase subunit I.